The sequence spans 84 residues: Esculentin-1B (84 aa).

Residues 1–22 (MFTLKKPLLLIVLLGMISLSLC) form the signal peptide. A propeptide spanning residues 23-38 (EQERNADEEEGSEIKR) is cleaved from the precursor. An intrachain disulfide couples Cys78 to Cys84.

It belongs to the frog skin active peptide (FSAP) family. Brevinin subfamily. Expressed by the skin glands.

The protein resides in the secreted. Shows antibacterial activity against representative Gram-negative and Gram-positive bacterial species, and hemolytic activity. The protein is Esculentin-1B of Pelophylax lessonae (Pool frog).